The chain runs to 149 residues: D-aminoacyl-tRNA deacylase (149 aa).

Residues 137-138 (GP) carry the Gly-cisPro motif, important for rejection of L-amino acids motif.

This sequence belongs to the DTD family. Homodimer.

It is found in the cytoplasm. The enzyme catalyses glycyl-tRNA(Ala) + H2O = tRNA(Ala) + glycine + H(+). It catalyses the reaction a D-aminoacyl-tRNA + H2O = a tRNA + a D-alpha-amino acid + H(+). Functionally, an aminoacyl-tRNA editing enzyme that deacylates mischarged D-aminoacyl-tRNAs. Also deacylates mischarged glycyl-tRNA(Ala), protecting cells against glycine mischarging by AlaRS. Acts via tRNA-based rather than protein-based catalysis; rejects L-amino acids rather than detecting D-amino acids in the active site. By recycling D-aminoacyl-tRNA to D-amino acids and free tRNA molecules, this enzyme counteracts the toxicity associated with the formation of D-aminoacyl-tRNA entities in vivo and helps enforce protein L-homochirality. In Koribacter versatilis (strain Ellin345), this protein is D-aminoacyl-tRNA deacylase.